The sequence spans 325 residues: Beta-ketoacyl-[acyl-carrier-protein] synthase III (325 aa).

Active-site residues include C112 and H250. The ACP-binding stretch occupies residues Q251 to R255. The active site involves N280.

This sequence belongs to the thiolase-like superfamily. FabH family. As to quaternary structure, homodimer.

It localises to the cytoplasm. It catalyses the reaction malonyl-[ACP] + acetyl-CoA + H(+) = 3-oxobutanoyl-[ACP] + CO2 + CoA. The protein operates within lipid metabolism; fatty acid biosynthesis. Functionally, catalyzes the condensation reaction of fatty acid synthesis by the addition to an acyl acceptor of two carbons from malonyl-ACP. Catalyzes the first condensation reaction which initiates fatty acid synthesis and may therefore play a role in governing the total rate of fatty acid production. Possesses both acetoacetyl-ACP synthase and acetyl transacylase activities. Its substrate specificity determines the biosynthesis of branched-chain and/or straight-chain of fatty acids. The protein is Beta-ketoacyl-[acyl-carrier-protein] synthase III of Streptococcus mutans serotype c (strain ATCC 700610 / UA159).